Here is a 142-residue protein sequence, read N- to C-terminus: Translation initiation factor 2 subunit beta (142 aa).

The protein belongs to the eIF-2-beta/eIF-5 family. In terms of assembly, heterotrimer composed of an alpha, a beta and a gamma chain.

Functionally, eIF-2 functions in the early steps of protein synthesis by forming a ternary complex with GTP and initiator tRNA. The polypeptide is Translation initiation factor 2 subunit beta (Methanosphaera stadtmanae (strain ATCC 43021 / DSM 3091 / JCM 11832 / MCB-3)).